The chain runs to 315 residues: Shiga-like toxin 1 subunit A (315 aa).

Residues M1 to A22 form the signal peptide. Residues K23–R273 form an A1 region. Residue E189 is part of the active site. C264 and C283 are joined by a disulfide. Positions M274–S315 are A2.

Belongs to the ribosome-inactivating protein family. In terms of assembly, shiga-like toxin contains a single subunit A and five copies of subunit B.

Its subcellular location is the secreted. It catalyses the reaction Endohydrolysis of the N-glycosidic bond at one specific adenosine on the 28S rRNA.. The A subunit is responsible for inhibiting protein synthesis through the catalytic inactivation of 60S ribosomal subunits. After endocytosis, the A subunit is cleaved by furin in two fragments, A1 and A2: A1 is the catalytically active fragment, and A2 is essential for holotoxin assembly with the B subunits. In Escherichia coli (Bacteriophage H19B), this protein is Shiga-like toxin 1 subunit A (stxA).